A 418-amino-acid chain; its full sequence is Gamma-glutamyl phosphate reductase (418 aa).

It belongs to the gamma-glutamyl phosphate reductase family.

It is found in the cytoplasm. It catalyses the reaction L-glutamate 5-semialdehyde + phosphate + NADP(+) = L-glutamyl 5-phosphate + NADPH + H(+). The protein operates within amino-acid biosynthesis; L-proline biosynthesis; L-glutamate 5-semialdehyde from L-glutamate: step 2/2. Catalyzes the NADPH-dependent reduction of L-glutamate 5-phosphate into L-glutamate 5-semialdehyde and phosphate. The product spontaneously undergoes cyclization to form 1-pyrroline-5-carboxylate. In Teredinibacter turnerae (strain ATCC 39867 / T7901), this protein is Gamma-glutamyl phosphate reductase.